We begin with the raw amino-acid sequence, 499 residues long: Spore germination protein GerQA (499 aa).

3 consecutive transmembrane segments (helical) span residues 285–305, 376–396, and 409–429; these read LFAF…LTYH, SNVL…APIY, and FIIS…SLLL.

It belongs to the GerABKA family.

It is found in the membrane. Its function is as follows. Required for the germination response to inosine. Has no role in L-alanine germination. The sequence is that of Spore germination protein GerQA (gerQA) from Bacillus cereus.